Here is a 191-residue protein sequence, read N- to C-terminus: Transcriptional activator GvpE1 (191 aa).

Positions 31-51 (SDGASDHADQPPDEGATQRYT) are disordered. 140–145 (KRKVYR) is a binding site for DNA. The leucine-zipper stretch occupies residues 150 to 181 (EGAFTRIDHMVDQLLLFSLVLKAVMTDCKARQ).

In terms of assembly, interacts with GvpD.

It is found in the cytoplasm. With respect to regulation, the amount of protein that accumulates is controlled by GvpD; GvpD causes a reduction in the amount of GvpE, preventing accumulation of excessive amounts of gas vesicles. Its function is as follows. Plays a regulatory role in gas vesicle synthesis, activates transcription of the gvpA operon, and probably of the gvpD operon. Gas vesicles are hollow, gas filled proteinaceous nanostructures found in several microbial planktonic microorganisms. They allow positioning of halobacteria at the optimal depth for growth in the poorly aerated, shallow brine pools of their habitat. Expression of a 9.5 kb p-vac DNA fragment containing 2 divergently transcribed regions (gvpD-gvpE-gvpF-gvpG-gvpH-gvpI-gvpJ-gvpK-gvpL-gvpM and gvpA-gvpC-gvpN-gvpO) allows H.volcanii to produce gas vesicles. A similar region restores gas vesicle production in H.halobium without the p-vac locus, but it still has the c-vac locus. This is Transcriptional activator GvpE1 (gvpE11) from Halobacterium salinarum (strain ATCC 700922 / JCM 11081 / NRC-1) (Halobacterium halobium).